The chain runs to 256 residues: MQIKIGEVESKLNKIIEEDGAAYFVLIDPDEKNYREIANHVKNYADAIIIGGSIGIISLDEVTKEIKEITGLPVILFPGNVDGVTKEADAVLFMTLMNSKNTYWNMTAPTLGALTIKKYGLETLPMAYLGIEPISKTAVGFVGEVNEIPQKKPEIAGIYSLSASYFGMRWVYLEAGSGAEYPVNNEMIGISKKLSGINIIVGGGIRTPEVAYEKVMSGADVIVTGTLTEKDPEAVKEMKKAIKKAGMDKLKMLSKK.

Residues Asp-28 and Ser-53 each coordinate Mg(2+). Residues 172-178 (YLEAGSG), 203-204 (GG), and 225-226 (GT) contribute to the sn-glycerol 1-phosphate site.

This sequence belongs to the GGGP/HepGP synthase family. Group II subfamily. It depends on Mg(2+) as a cofactor.

The protein resides in the cytoplasm. It catalyses the reaction sn-glycerol 1-phosphate + (2E,6E,10E)-geranylgeranyl diphosphate = sn-3-O-(geranylgeranyl)glycerol 1-phosphate + diphosphate. The protein operates within membrane lipid metabolism; glycerophospholipid metabolism. In terms of biological role, prenyltransferase that catalyzes the transfer of the geranylgeranyl moiety of geranylgeranyl diphosphate (GGPP) to the C3 hydroxyl of sn-glycerol-1-phosphate (G1P). This reaction is the first ether-bond-formation step in the biosynthesis of archaeal membrane lipids. This Methanococcus maripaludis (strain C7 / ATCC BAA-1331) protein is Geranylgeranylglyceryl phosphate synthase.